The following is a 271-amino-acid chain: Elongation factor Ts (271 aa).

An involved in Mg(2+) ion dislocation from EF-Tu region spans residues 76 to 79 (TDFV).

This sequence belongs to the EF-Ts family.

Its subcellular location is the cytoplasm. Associates with the EF-Tu.GDP complex and induces the exchange of GDP to GTP. It remains bound to the aminoacyl-tRNA.EF-Tu.GTP complex up to the GTP hydrolysis stage on the ribosome. In Mycobacterium tuberculosis (strain ATCC 25177 / H37Ra), this protein is Elongation factor Ts.